The chain runs to 266 residues: Glucosamine-6-phosphate deaminase (266 aa).

Aspartate 72 acts as the Proton acceptor; for enolization step in catalysis. Aspartate 141 functions as the For ring-opening step in the catalytic mechanism. Histidine 143 acts as the Proton acceptor; for ring-opening step in catalysis. The active-site For ring-opening step is the glutamate 148.

Belongs to the glucosamine/galactosamine-6-phosphate isomerase family. NagB subfamily. As to quaternary structure, homohexamer.

It catalyses the reaction alpha-D-glucosamine 6-phosphate + H2O = beta-D-fructose 6-phosphate + NH4(+). Its pathway is amino-sugar metabolism; N-acetylneuraminate degradation; D-fructose 6-phosphate from N-acetylneuraminate: step 5/5. Its activity is regulated as follows. Allosterically activated by N-acetylglucosamine 6-phosphate (GlcNAc6P). Its function is as follows. Catalyzes the reversible isomerization-deamination of glucosamine 6-phosphate (GlcN6P) to form fructose 6-phosphate (Fru6P) and ammonium ion. The chain is Glucosamine-6-phosphate deaminase from Aeromonas hydrophila subsp. hydrophila (strain ATCC 7966 / DSM 30187 / BCRC 13018 / CCUG 14551 / JCM 1027 / KCTC 2358 / NCIMB 9240 / NCTC 8049).